We begin with the raw amino-acid sequence, 127 residues long: Ribonuclease P protein component 1 (127 aa).

It belongs to the eukaryotic/archaeal RNase P protein component 1 family. As to quaternary structure, consists of a catalytic RNA component and at least 5 protein subunits. Forms a heterodimeric subcomplex with Rnp4. Reconstituted enzyme missing individual protein subunits is suboptimally active, showing each subunit contributes to optimization of activity.

Its subcellular location is the cytoplasm. It catalyses the reaction Endonucleolytic cleavage of RNA, removing 5'-extranucleotides from tRNA precursor.. Its function is as follows. Part of ribonuclease P (RNase P), a protein complex that generates mature tRNA molecules by cleaving their 5'-ends. Binds RNase P RNA. The sequence is that of Ribonuclease P protein component 1 from Pyrococcus horikoshii (strain ATCC 700860 / DSM 12428 / JCM 9974 / NBRC 100139 / OT-3).